Reading from the N-terminus, the 2212-residue chain is Nonribosomal peptide synthetase ftmPS (2212 aa).

The adenylation 1 stretch occupies residues 74 to 473; it reads TYAELDSLSD…IEHHLQQTLP (400 aa). The region spanning 592 to 669 is the Carrier 1 domain; that stretch reads PPSTLKETTI…EQSQRAGLIQ (78 aa). S629 is modified (O-(pantetheine 4'-phosphoryl)serine). Residues 708–973 are condensation 1; sequence EDIYPCTALQ…IATVPLRIRV (266 aa). Positions 1167-1564 are adenylation 2; sequence TYRELWAHSS…LSAVEASLMR (398 aa). Residues 1678 to 1757 form the Carrier 2 domain; the sequence is PMSDDNERRL…QFRHLITEDD (80 aa). O-(pantetheine 4'-phosphoryl)serine is present on S1715. A condensation 2 region spans residues 1815 to 2070; it reads HFQFDLSGAI…CTNYIPYRLS (256 aa).

Belongs to the NRP synthetase family.

The enzyme catalyses L-proline + L-tryptophan + 2 ATP = brevianamide F + 2 AMP + 2 diphosphate + 2 H(+). The protein operates within mycotoxin biosynthesis. In terms of biological role, nonribosomal peptide synthetase; part of the gene cluster that mediates the biosynthesis of fumitremorgins, indole alkaloids that carry not only intriguing chemical structures, but also interesting biological and pharmacological activities. The biosynthesis of fumitremorgin-type alkaloids begins by condensation of the two amino acids L-tryptophan and L-proline to brevianamide F, catalyzed by the non-ribosomal peptide synthetase ftmPS/ftmA. Brevianamide F is then prenylated by the prenyltransferase ftmPT1/ftmB in the presence of dimethylallyl diphosphate, resulting in the formation of tryprostatin B. The three cytochrome P450 monooxygenases, ftmP450-1/ftmC, ftmP450-2/ftmE and ftmP450-3/FtmG, are responsible for the conversion of tryprostatin B to 6-hydroxytryprostatin B, tryprostatin A to fumitremorgin C and fumitremorgin C to 12,13-dihydroxyfumitremorgin C, respectively. The putative methyltransferase ftmMT/ftmD is expected for the conversion of 6-hydroxytryprostatin B to tryprostatin A. FtmPT2/FtmH catalyzes the prenylation of 12,13-dihydroxyfumitre-morgin C in the presence of dimethylallyl diphosphate, resulting in the formation of fumitremorgin B. Fumitremorgin B is further converted to verruculogen by ftmOx1/ftmF via the insertion of an endoperoxide bond between the two prenyl moieties. Finally, verruculogen is further converted to fumitremorgin A by the verruculogen prenyltransferase ftmPT3. The polypeptide is Nonribosomal peptide synthetase ftmPS (ftmPS) (Neosartorya fischeri (strain ATCC 1020 / DSM 3700 / CBS 544.65 / FGSC A1164 / JCM 1740 / NRRL 181 / WB 181) (Aspergillus fischerianus)).